The chain runs to 353 residues: Phosphate acyltransferase (353 aa).

Belongs to the PlsX family. In terms of assembly, homodimer. Probably interacts with PlsY.

The protein resides in the cytoplasm. The enzyme catalyses a fatty acyl-[ACP] + phosphate = an acyl phosphate + holo-[ACP]. It functions in the pathway lipid metabolism; phospholipid metabolism. Its function is as follows. Catalyzes the reversible formation of acyl-phosphate (acyl-PO(4)) from acyl-[acyl-carrier-protein] (acyl-ACP). This enzyme utilizes acyl-ACP as fatty acyl donor, but not acyl-CoA. The sequence is that of Phosphate acyltransferase from Bradyrhizobium sp. (strain BTAi1 / ATCC BAA-1182).